The primary structure comprises 100 residues: MINEERLLKVVLAPHVSEKATLAAEVNNTVVFKVLKDANKEEIKAAVEKLFEVEVNSVRTVNVKGKTKRHGASFGKRKDWKKAYVVLKEGQDIDFAGSEG.

Belongs to the universal ribosomal protein uL23 family. As to quaternary structure, part of the 50S ribosomal subunit. Contacts protein L29, and trigger factor when it is bound to the ribosome.

Functionally, one of the early assembly proteins it binds 23S rRNA. One of the proteins that surrounds the polypeptide exit tunnel on the outside of the ribosome. Forms the main docking site for trigger factor binding to the ribosome. This Pseudoalteromonas atlantica (strain T6c / ATCC BAA-1087) protein is Large ribosomal subunit protein uL23.